A 179-amino-acid polypeptide reads, in one-letter code: Large ribosomal subunit protein uL6 (179 aa).

This sequence belongs to the universal ribosomal protein uL6 family. In terms of assembly, part of the 50S ribosomal subunit.

This protein binds to the 23S rRNA, and is important in its secondary structure. It is located near the subunit interface in the base of the L7/L12 stalk, and near the tRNA binding site of the peptidyltransferase center. This chain is Large ribosomal subunit protein uL6, found in Bifidobacterium animalis subsp. lactis (strain AD011).